The sequence spans 257 residues: 3-alpha-hydroxysteroid dehydrogenase/carbonyl reductase (257 aa).

Residues 8-13 (GCATGI), Asp-32, 41-42 (DL), and Gly-71 each bind NAD(+). Residue Ser-114 coordinates substrate. Tyr-155 and Lys-159 together coordinate NAD(+). Catalysis depends on Tyr-155, which acts as the Proton acceptor.

It belongs to the short-chain dehydrogenases/reductases (SDR) family. As to quaternary structure, homodimer.

It localises to the cytoplasm. It catalyses the reaction a 3alpha-hydroxysteroid + NADP(+) = a 3-oxosteroid + NADPH + H(+). The enzyme catalyses a 3alpha-hydroxysteroid + NAD(+) = a 3-oxosteroid + NADH + H(+). Functionally, catalyzes the reversible interconversion of hydroxy and oxo groups at position 3 of the steroid nucleus. Along with the 3 alpha-hydroxysteroid dehydrogenase and 3-oxo-reductase activities towards a variety of cis or trans fused A/B ring steroids, it also reduces several xenobiotic carbonyl compounds, including a metyrapone-based class of insecticides, to the respective alcohol metabolites. No detectable activity on testosterone, progesterone or 3-oxo-desogestrel. The sequence is that of 3-alpha-hydroxysteroid dehydrogenase/carbonyl reductase (hsdA) from Comamonas testosteroni (Pseudomonas testosteroni).